The primary structure comprises 64 residues: H/ACA ribonucleoprotein complex subunit 3 (64 aa).

This sequence belongs to the NOP10 family. As to quaternary structure, component of the box H/ACA small nucleolar ribonucleoprotein (H/ACA snoRNP) complex consisting of Nop60B, Gar1, NPH2 and Nop10, and associated with H/ACA-type snoRNAs.

It localises to the nucleus. It is found in the nucleolus. Functionally, component of the box H/ACA small nucleolar ribonucleoprotein (H/ACA snoRNP) complex, which catalyzes pseudouridylation of rRNA. This involves the isomerization of uridine such that the ribose is subsequently attached to C5, instead of the normal N1. Pseudouridine ('psi') residues may serve to stabilize the conformation of rRNAs. Required for ribosome biogenesis. H/ACA snoRNP complex-dependent ribosome biogenesis is important in female germline cell differentiation during oogenesis. The polypeptide is H/ACA ribonucleoprotein complex subunit 3 (Drosophila melanogaster (Fruit fly)).